We begin with the raw amino-acid sequence, 204 residues long: Cytochrome b6 (204 aa).

Residues 23-43 traverse the membrane as a helical segment; sequence YCLGGITLTSFLVQVATGSAM. Cys24 is a binding site for heme c. The heme b site is built by His75 and His89. The next 3 membrane-spanning stretches (helical) occupy residues 81-101, 107-127, and 136-157; these read MMVL…GFKK, WVTG…GYSL, and AVKI…LVEL. Heme b is bound by residues His176 and His191. Residues 177-197 traverse the membrane as a helical segment; the sequence is TFILPLLTAVFMPMHFLMIRK.

The protein belongs to the cytochrome b family. PetB subfamily. In terms of assembly, the 4 large subunits of the cytochrome b6-f complex are cytochrome b6, subunit IV (17 kDa polypeptide, PetD), cytochrome f and the Rieske protein, while the 4 small subunits are PetG, PetL, PetM and PetN. The complex functions as a dimer. It depends on heme b as a cofactor. The cofactor is heme c.

The protein resides in the plastid. It is found in the chloroplast thylakoid membrane. Component of the cytochrome b6-f complex, which mediates electron transfer between photosystem II (PSII) and photosystem I (PSI), cyclic electron flow around PSI, and state transitions. In Picea abies (Norway spruce), this protein is Cytochrome b6.